A 1373-amino-acid polypeptide reads, in one-letter code: Insulin-like growth factor 1 receptor (1373 aa).

Positions 1–30 (MKSGSGGGSPTSLWGLVFLSAALSLWPTSG) are cleaved as a signal peptide. A disulfide bridge links cysteine 33 with cysteine 52. Residues asparagine 51, asparagine 102, and asparagine 135 are each glycosylated (N-linked (GlcNAc...) asparagine). 13 disulfide bridges follow: cysteine 150–cysteine 178, cysteine 182–cysteine 205, cysteine 192–cysteine 211, cysteine 215–cysteine 224, cysteine 219–cysteine 230, cysteine 231–cysteine 239, cysteine 235–cysteine 248, cysteine 251–cysteine 260, cysteine 264–cysteine 276, cysteine 282–cysteine 303, cysteine 307–cysteine 321, cysteine 324–cysteine 328, and cysteine 332–cysteine 354. A glycan (N-linked (GlcNAc...) asparagine) is linked at asparagine 245. A glycan (N-linked (GlcNAc...) asparagine) is linked at asparagine 314. N-linked (GlcNAc...) asparagine glycosylation is found at asparagine 418 and asparagine 439. A disulfide bridge links cysteine 456 with cysteine 489. 4 Fibronectin type-III domains span residues 490–610 (ESDV…TNAS), 611–709 (VPSI…TEAE), 735–829 (RPER…TMPA), and 835–928 (IPGP…VPAK). N-linked (GlcNAc...) asparagine glycans are attached at residues asparagine 535, asparagine 608, asparagine 623, asparagine 641, asparagine 748, asparagine 757, asparagine 765, asparagine 901, and asparagine 914. Residues 742-936 (DVMQVANTTM…AKTTYENFMH (195 aa)) are Extracellular-facing. The helical transmembrane segment at 937-960 (LIIALPVAILLIVGGLVIMLYVFH) threads the bilayer. Topologically, residues 961-1373 (RKRNNSRLGN…ALPLPQSSTC (413 aa)) are cytoplasmic. The IRS1- and SHC1-binding motif lies at 978–981 (NPEY). Position 981 is a phosphotyrosine (tyrosine 981). Residues 1000–1276 (ITMNRELGQG…SIKDEMEPSF (277 aa)) form the Protein kinase domain. Residues 1006–1014 (LGQGSFGMV) and lysine 1034 each bind ATP. Aspartate 1137 serves as the catalytic Proton acceptor. Phosphotyrosine; by autocatalysis is present on residues tyrosine 1163, tyrosine 1167, and tyrosine 1168. Residues lysine 1170 and lysine 1173 each participate in a glycyl lysine isopeptide (Lys-Gly) (interchain with G-Cter in ubiquitin) cross-link. Serine 1280 is modified (phosphoserine; by GSK3-beta). Residues 1283-1373 (YSEENKPPEP…ALPLPQSSTC (91 aa)) form a disordered region. Phosphoserine is present on serine 1284. Acidic residues predominate over residues 1292–1305 (PEELEMELEMEPEN). The segment covering 1306–1322 (MESVPLDPSASSASLPL) has biased composition (low complexity). The segment covering 1323-1332 (PERHSGHKAE) has biased composition (basic and acidic residues).

Belongs to the protein kinase superfamily. Tyr protein kinase family. Insulin receptor subfamily. In terms of assembly, tetramer of 2 alpha and 2 beta chains linked by disulfide bonds. The alpha chains contribute to the formation of the ligand-binding domain, while the beta chain carries the kinase domain. Interacts with PIK3R1 and with the PTB/PID domains of IRS1 and SHC1 in vitro when autophosphorylated on tyrosine residues. Forms a hybrid receptor with INSR, the hybrid is a tetramer consisting of 1 alpha chain and 1 beta chain of INSR and 1 alpha chain and 1 beta chain of IGF1R. Interacts with ARRB1 and ARRB2. Interacts with GRB10. Interacts with RACK1. Interacts with SOCS1, SOCS2 and SOCS3. Interacts with 14-3-3 proteins. Interacts with NMD2. Interacts with MAP3K5. Interacts with STAT3. Found in a ternary complex with IGF1 and ITGAV:ITGB3 or ITGA6:ITGB4. Interacts (nascent precursor form) with ZFAND2B. Autophosphorylated on tyrosine residues in response to ligand binding. Autophosphorylation occurs in trans, i.e. one subunit of the dimeric receptor phosphorylates tyrosine residues on the other subunit. Autophosphorylation occurs in a sequential manner; Tyr-1167 is predominantly phosphorylated first, followed by phosphorylation of Tyr-1163 and Tyr-1168. While every single phosphorylation increases kinase activity, all three tyrosine residues in the kinase activation loop (Tyr-1163, Tyr-1167 and Tyr-1168) have to be phosphorylated for optimal activity. Can be autophosphorylated at additional tyrosine residues (in vitro). Autophosphorylated is followed by phosphorylation of juxtamembrane tyrosines and C-terminal serines. May also be phosphorylated at Tyr-1163 and Tyr-1168 by mTORC2. Phosphorylation of Tyr-981 is required for IRS1- and SHC1-binding. Phosphorylation of Ser-1280 by GSK-3beta restrains kinase activity and promotes cell surface expression, it requires a priming phosphorylation at Ser-1284. Dephosphorylated by PTPN1. Post-translationally, polyubiquitinated at Lys-1170 and Lys-1173 through both 'Lys-48' and 'Lys-29' linkages, promoting receptor endocytosis and subsequent degradation by the proteasome. Ubiquitination is facilitated by pre-existing phosphorylation. In terms of processing, sumoylated with SUMO1. Controlled by regulated intramembrane proteolysis (RIP). Undergoes metalloprotease-dependent constitutive ectodomain shedding to produce a membrane-anchored 52 kDa C-Terminal fragment which is further processed by presenilin gamma-secretase to yield an intracellular 50 kDa fragment.

The protein resides in the cell membrane. The enzyme catalyses L-tyrosyl-[protein] + ATP = O-phospho-L-tyrosyl-[protein] + ADP + H(+). With respect to regulation, activated by autophosphorylation at Tyr-1163, Tyr-1167 and Tyr-1168 on the kinase activation loop; phosphorylation at all three tyrosine residues is required for optimal kinase activity. Inhibited by MSC1609119A-1, BMS-754807, PQIP, benzimidazole pyridinone, isoquinolinedione, bis-azaindole, 3-cyanoquinoline, 2,4-bis-arylamino-1,3-pyrimidine, pyrrolopyrimidine, pyrrole-5-carboxaldehyde, picropodophyllin (PPP), tyrphostin derivatives. While most inhibitors bind to the ATP binding pocket, MSC1609119A-1 functions as allosteric inhibitor and binds close to the DFG motif and the activation loop. Its function is as follows. Receptor tyrosine kinase which mediates actions of insulin-like growth factor 1 (IGF1). Binds IGF1 with high affinity and IGF2 and insulin (INS) with a lower affinity. The activated IGF1R is involved in cell growth and survival control. IGF1R is crucial for tumor transformation and survival of malignant cell. Ligand binding activates the receptor kinase, leading to receptor autophosphorylation, and tyrosines phosphorylation of multiple substrates, that function as signaling adapter proteins including, the insulin-receptor substrates (IRS1/2), Shc and 14-3-3 proteins. Phosphorylation of IRSs proteins lead to the activation of two main signaling pathways: the PI3K-AKT/PKB pathway and the Ras-MAPK pathway. The result of activating the MAPK pathway is increased cellular proliferation, whereas activating the PI3K pathway inhibits apoptosis and stimulates protein synthesis. Phosphorylated IRS1 can activate the 85 kDa regulatory subunit of PI3K (PIK3R1), leading to activation of several downstream substrates, including protein AKT/PKB. AKT phosphorylation, in turn, enhances protein synthesis through mTOR activation and triggers the antiapoptotic effects of IGFIR through phosphorylation and inactivation of BAD. In parallel to PI3K-driven signaling, recruitment of Grb2/SOS by phosphorylated IRS1 or Shc leads to recruitment of Ras and activation of the ras-MAPK pathway. In addition to these two main signaling pathways IGF1R signals also through the Janus kinase/signal transducer and activator of transcription pathway (JAK/STAT). Phosphorylation of JAK proteins can lead to phosphorylation/activation of signal transducers and activators of transcription (STAT) proteins. In particular activation of STAT3, may be essential for the transforming activity of IGF1R. The JAK/STAT pathway activates gene transcription and may be responsible for the transforming activity. JNK kinases can also be activated by the IGF1R. IGF1 exerts inhibiting activities on JNK activation via phosphorylation and inhibition of MAP3K5/ASK1, which is able to directly associate with the IGF1R. When present in a hybrid receptor with INSR, binds IGF1. This is Insulin-like growth factor 1 receptor (Igf1r) from Mus musculus (Mouse).